Consider the following 285-residue polypeptide: Small ribosomal subunit biogenesis GTPase RsgA (285 aa).

One can recognise a CP-type G domain in the interval 61-215 (KNQLIRPKVA…IIDSPGFSSF (155 aa)). Residues 110-113 (TKID) and 159-167 (GQTGVGKTS) contribute to the GTP site. Positions 239, 244, 246, and 254 each coordinate Zn(2+).

This sequence belongs to the TRAFAC class YlqF/YawG GTPase family. RsgA subfamily. As to quaternary structure, monomer. Associates with 30S ribosomal subunit, binds 16S rRNA. Zn(2+) serves as cofactor.

It localises to the cytoplasm. Its function is as follows. One of several proteins that assist in the late maturation steps of the functional core of the 30S ribosomal subunit. Helps release RbfA from mature subunits. May play a role in the assembly of ribosomal proteins into the subunit. Circularly permuted GTPase that catalyzes slow GTP hydrolysis, GTPase activity is stimulated by the 30S ribosomal subunit. In Mesomycoplasma hyopneumoniae (strain 7448) (Mycoplasma hyopneumoniae), this protein is Small ribosomal subunit biogenesis GTPase RsgA.